The primary structure comprises 234 residues: Sugar fermentation stimulation protein homolog (234 aa).

Belongs to the SfsA family.

The chain is Sugar fermentation stimulation protein homolog from Shewanella sp. (strain MR-7).